Consider the following 53-residue polypeptide: UPF0391 membrane protein PSEEN0090 (53 aa).

2 consecutive transmembrane segments (helical) span residues Trp-4–Ala-24 and Gly-29–Gly-49.

This sequence belongs to the UPF0391 family.

The protein localises to the cell membrane. The protein is UPF0391 membrane protein PSEEN0090 of Pseudomonas entomophila (strain L48).